The primary structure comprises 243 residues: UPF0502 protein RALTA_B0914 (243 aa).

The segment covering 1–10 (MPSTPESDPT) has biased composition (polar residues). A disordered region spans residues 1 to 23 (MPSTPESDPTQPGDRPARPALRP).

The protein belongs to the UPF0502 family.

This is UPF0502 protein RALTA_B0914 from Cupriavidus taiwanensis (strain DSM 17343 / BCRC 17206 / CCUG 44338 / CIP 107171 / LMG 19424 / R1) (Ralstonia taiwanensis (strain LMG 19424)).